Consider the following 1396-residue polypeptide: Major capsid protein (1396 aa).

Belongs to the herpesviridae major capsid protein family. Homomultimer. Makes the hexons and eleven out of twelve pentons. Interacts with triplex proteins 1/TRX1 and 2/TRX2; adjacent capsomers are linked together in groups of three by triplexes, heterotrimeric complexes composed of one molecule of TRX1 and two molecules of TRX2. Interacts with scaffold protein; this interaction allows efficient MCP transport to the host nucleus. Interacts with capsid vertex component 2/CVC2. Interacts with the small capsomere-interacting protein/SCP.

The protein resides in the virion. It is found in the host nucleus. In terms of biological role, self-assembles to form an icosahedral capsid with a T=16 symmetry, about 200 nm in diameter, and consisting of 150 hexons and 12 pentons (total of 162 capsomers). Hexons form the edges and faces of the capsid and are each composed of six MCP molecules. In contrast, one penton is found at each of the 12 vertices. Eleven of the pentons are MCP pentamers, while the last vertex is occupied by the portal complex. The capsid is surrounded by a layer of proteinaceous material designated the tegument which, in turn, is enclosed in an envelope of host cell-derived lipids containing virus-encoded glycoproteins. The polypeptide is Major capsid protein (Varicella-zoster virus (strain Dumas) (HHV-3)).